Reading from the N-terminus, the 331-residue chain is Ketol-acid reductoisomerase (NADP(+)) (331 aa).

Residues 2–182 (AQLFYDSDAD…GGTRAGILET (181 aa)) form the KARI N-terminal Rossmann domain. NADP(+) contacts are provided by residues 25–28 (YGSQ), Ser-51, Ser-53, and 83–86 (DEFQ). His-108 is a catalytic residue. Gly-134 contacts NADP(+). Positions 183–328 (NFKEETETDL…KGLRAMFSWL (146 aa)) constitute a KARI C-terminal knotted domain. The Mg(2+) site is built by Asp-191, Glu-195, Glu-227, and Glu-231. Position 252 (Ser-252) interacts with substrate.

This sequence belongs to the ketol-acid reductoisomerase family. Mg(2+) is required as a cofactor.

The catalysed reaction is (2R)-2,3-dihydroxy-3-methylbutanoate + NADP(+) = (2S)-2-acetolactate + NADPH + H(+). It catalyses the reaction (2R,3R)-2,3-dihydroxy-3-methylpentanoate + NADP(+) = (S)-2-ethyl-2-hydroxy-3-oxobutanoate + NADPH + H(+). It participates in amino-acid biosynthesis; L-isoleucine biosynthesis; L-isoleucine from 2-oxobutanoate: step 2/4. The protein operates within amino-acid biosynthesis; L-valine biosynthesis; L-valine from pyruvate: step 2/4. In terms of biological role, involved in the biosynthesis of branched-chain amino acids (BCAA). Catalyzes an alkyl-migration followed by a ketol-acid reduction of (S)-2-acetolactate (S2AL) to yield (R)-2,3-dihydroxy-isovalerate. In the isomerase reaction, S2AL is rearranged via a Mg-dependent methyl migration to produce 3-hydroxy-3-methyl-2-ketobutyrate (HMKB). In the reductase reaction, this 2-ketoacid undergoes a metal-dependent reduction by NADPH to yield (R)-2,3-dihydroxy-isovalerate. The protein is Ketol-acid reductoisomerase (NADP(+)) of Prochlorococcus marinus (strain MIT 9211).